The primary structure comprises 64 residues: uncharacterized protein (64 aa).

Residues 35–64 (TIRKPPIEHAAGPLGSTSRAGHRSYGGVAS) are disordered.

This is an uncharacterized protein from Mycobacterium tuberculosis (strain ATCC 25618 / H37Rv).